The following is a 456-amino-acid chain: Bifunctional protein GlmU (456 aa).

Residues 1–229 (MTKKALSAVI…VMEVEGANNR (229 aa)) are pyrophosphorylase. Residues 11 to 14 (LAAG), K25, Q76, 81 to 82 (GT), 103 to 105 (YGD), G140, E154, N169, and N227 each bind UDP-N-acetyl-alpha-D-glucosamine. D105 contributes to the Mg(2+) binding site. N227 contributes to the Mg(2+) binding site. Residues 230–250 (LQLAALERYLQNKQASKLLLE) are linker. The segment at 251-456 (GVMIYDPARF…QGWQRPIKKK (206 aa)) is N-acetyltransferase. UDP-N-acetyl-alpha-D-glucosamine contacts are provided by R333 and K351. Residue H363 is the Proton acceptor of the active site. Y366 and N377 together coordinate UDP-N-acetyl-alpha-D-glucosamine. Residues A380, 386–387 (NY), S405, A423, and R440 each bind acetyl-CoA.

This sequence in the N-terminal section; belongs to the N-acetylglucosamine-1-phosphate uridyltransferase family. In the C-terminal section; belongs to the transferase hexapeptide repeat family. As to quaternary structure, homotrimer. It depends on Mg(2+) as a cofactor.

The protein localises to the cytoplasm. The enzyme catalyses alpha-D-glucosamine 1-phosphate + acetyl-CoA = N-acetyl-alpha-D-glucosamine 1-phosphate + CoA + H(+). It carries out the reaction N-acetyl-alpha-D-glucosamine 1-phosphate + UTP + H(+) = UDP-N-acetyl-alpha-D-glucosamine + diphosphate. It functions in the pathway nucleotide-sugar biosynthesis; UDP-N-acetyl-alpha-D-glucosamine biosynthesis; N-acetyl-alpha-D-glucosamine 1-phosphate from alpha-D-glucosamine 6-phosphate (route II): step 2/2. It participates in nucleotide-sugar biosynthesis; UDP-N-acetyl-alpha-D-glucosamine biosynthesis; UDP-N-acetyl-alpha-D-glucosamine from N-acetyl-alpha-D-glucosamine 1-phosphate: step 1/1. The protein operates within bacterial outer membrane biogenesis; LPS lipid A biosynthesis. Catalyzes the last two sequential reactions in the de novo biosynthetic pathway for UDP-N-acetylglucosamine (UDP-GlcNAc). The C-terminal domain catalyzes the transfer of acetyl group from acetyl coenzyme A to glucosamine-1-phosphate (GlcN-1-P) to produce N-acetylglucosamine-1-phosphate (GlcNAc-1-P), which is converted into UDP-GlcNAc by the transfer of uridine 5-monophosphate (from uridine 5-triphosphate), a reaction catalyzed by the N-terminal domain. The polypeptide is Bifunctional protein GlmU (Haemophilus influenzae (strain PittEE)).